The primary structure comprises 431 residues: Serine hydroxymethyltransferase (431 aa).

Residues L128 and 132–134 (GHL) contribute to the (6S)-5,6,7,8-tetrahydrofolate site. The residue at position 237 (K237) is an N6-(pyridoxal phosphate)lysine. E253 serves as a coordination point for (6S)-5,6,7,8-tetrahydrofolate.

Belongs to the SHMT family. In terms of assembly, homodimer. Pyridoxal 5'-phosphate serves as cofactor.

The protein resides in the cytoplasm. The enzyme catalyses (6R)-5,10-methylene-5,6,7,8-tetrahydrofolate + glycine + H2O = (6S)-5,6,7,8-tetrahydrofolate + L-serine. The protein operates within one-carbon metabolism; tetrahydrofolate interconversion. It functions in the pathway amino-acid biosynthesis; glycine biosynthesis; glycine from L-serine: step 1/1. Its function is as follows. Catalyzes the reversible interconversion of serine and glycine with tetrahydrofolate (THF) serving as the one-carbon carrier. This reaction serves as the major source of one-carbon groups required for the biosynthesis of purines, thymidylate, methionine, and other important biomolecules. Also exhibits THF-independent aldolase activity toward beta-hydroxyamino acids, producing glycine and aldehydes, via a retro-aldol mechanism. The polypeptide is Serine hydroxymethyltransferase (Cereibacter sphaeroides (strain ATCC 17023 / DSM 158 / JCM 6121 / CCUG 31486 / LMG 2827 / NBRC 12203 / NCIMB 8253 / ATH 2.4.1.) (Rhodobacter sphaeroides)).